The following is a 96-amino-acid chain: Small ribosomal subunit protein bS6 (96 aa).

This sequence belongs to the bacterial ribosomal protein bS6 family.

Its function is as follows. Binds together with bS18 to 16S ribosomal RNA. This Streptococcus pneumoniae serotype 19F (strain G54) protein is Small ribosomal subunit protein bS6.